The primary structure comprises 279 residues: Acetyl-coenzyme A carboxylase carboxyl transferase subunit beta (279 aa).

The CoA carboxyltransferase N-terminal domain occupies 23–279 (LWWKCEECGA…LVTLFSMLKV (257 aa)). Zn(2+) is bound by residues Cys27, Cys30, Cys46, and Cys49. The segment at 27 to 49 (CEECGAMLHKKQFEDHFFTCAEC) adopts a C4-type zinc-finger fold.

This sequence belongs to the AccD/PCCB family. Acetyl-CoA carboxylase is a heterohexamer composed of biotin carboxyl carrier protein (AccB), biotin carboxylase (AccC) and two subunits each of ACCase subunit alpha (AccA) and ACCase subunit beta (AccD). Requires Zn(2+) as cofactor.

It localises to the cytoplasm. It carries out the reaction N(6)-carboxybiotinyl-L-lysyl-[protein] + acetyl-CoA = N(6)-biotinyl-L-lysyl-[protein] + malonyl-CoA. The protein operates within lipid metabolism; malonyl-CoA biosynthesis; malonyl-CoA from acetyl-CoA: step 1/1. In terms of biological role, component of the acetyl coenzyme A carboxylase (ACC) complex. Biotin carboxylase (BC) catalyzes the carboxylation of biotin on its carrier protein (BCCP) and then the CO(2) group is transferred by the transcarboxylase to acetyl-CoA to form malonyl-CoA. This chain is Acetyl-coenzyme A carboxylase carboxyl transferase subunit beta, found in Pelodictyon phaeoclathratiforme (strain DSM 5477 / BU-1).